The following is a 61-amino-acid chain: Potassium channel toxin kappa-KTx 2.8 (61 aa).

Positions 1–21 (GTVYVFLLLLAFGIFTDISNA) are cleaved as a signal peptide. Residues 22-35 (CSEQMDDEDSYEVE) constitute a propeptide that is removed on maturation. 2 cysteine pairs are disulfide-bonded: cysteine 41–cysteine 59 and cysteine 45–cysteine 55.

This sequence belongs to the short scorpion toxin superfamily. Potassium channel inhibitor kappa-KTx family. Kappa-KTx 2 subfamily. Expressed by the venom gland.

It is found in the secreted. Voltage-gated potassium channel inhibitor (Kv) that acts on Kv1.3/KCNA3 and Kv7.1/KCNQ1. 1 uM of the toxin inhibits Kv1.3/KCNA3 currents by 35.1%, whereas 10 uM of the toxin inhibits Kv7.1/KCNQ1 currents by 44.9%. The chain is Potassium channel toxin kappa-KTx 2.8 from Heterometrus petersii (Asian forest scorpion).